The primary structure comprises 378 residues: Leukocyte elastase inhibitor (378 aa).

Position 1 is an N-acetylmethionine (methionine 1). Residue lysine 137 is modified to N6-acetyllysine. Serine 299 carries the post-translational modification Phosphoserine. Residues 350–378 (DFIADHPFIFFIRHNPSSNILFLGRLSSP) form a CARD-binding motif (CBM) region.

It belongs to the serpin family. Ov-serpin subfamily. In terms of assembly, monomer. Interacts (via C-terminus) with CASP1; CASP4 (via CARD domain) and CASP5; these interactions regulate the activity of inflammatory caspases. Interacts with PRTN3. Interacts with GZMH.

Its subcellular location is the secreted. The protein resides in the cytoplasm. It is found in the cytolytic granule. The protein localises to the early endosome. Neutrophil serine protease inhibitor that plays an essential role in the regulation of the innate immune response, inflammation and cellular homeostasis. Acts primarily to protect the cell from proteases released in the cytoplasm during stress or infection. These proteases are important in killing microbes but when released from granules, these potent enzymes also destroy host proteins and contribute to mortality. Regulates the activity of the neutrophil proteases elastase, cathepsin G, proteinase-3, chymase, chymotrypsin, and kallikrein-3. Also acts as a potent intracellular inhibitor of GZMH by directly blocking its proteolytic activity. During inflammation, limits the activity of inflammatory caspases CASP1, CASP4 and CASP5 by suppressing their caspase-recruitment domain (CARD) oligomerization and enzymatic activation. When secreted, promotes the proliferation of beta-cells via its protease inhibitory function. In terms of biological role, may be cleaved leading to a loss of its anti-protease activity and to the appearance of an endonuclease activity. However no catalytic site was identified. This Sus scrofa (Pig) protein is Leukocyte elastase inhibitor (SERPINB1).